The chain runs to 795 residues: MEAIKPLPQVSSFSASVFSFLDGRFKESTDLSHSTGLVSELQTEISELDQRLAGLNRQLESGLAAYASFSDRVGGLFFEVNAKLADLSSSTSVTRSASDSGKEEEATEHVAGEDLPSLAKEVAQVESVRAYAETALKLDTLVGDIEDAVMSSLNKNLRTSRSSGFEEVRLHAIKTLKTTEEILSSVAKRHPRWARLVSAVDHRVDRALAMMRPQAIADYRALLSSLRWPPQLSTLTSASLDSKSENVQNPLFNMEGSLKSQYCGSFHALCSLQGLQLQRKSRQLGIHKGENVLFHQPLWAIEELVNPLTVASQRHFTKWSEKPEFIFALVYKITRDYVDSMDELLQPLVDEAKLAGYSCREEWVSAMVSSLSLYLVKEIFPIYVGQLDEANETDLRSEAKVSWLHLIDLMISFDKRVQSLVSQSGILSLQEDGNLLRISSLSVFCDRPDWLDLWAEIELDERLVKFKEEIDNDRNWTAKVQDELISSSNVYRPPIISSIFLQHLSSIIERSKSVPALYLRARFLRLAASPTIHKFLDCLLLRCQDADGLTALTENNDLIKVSNSINAGHYIESVLEEWSEDVFFLEMGTGQHDPQEVPGLENFTEPSEGIFGEEFEKLEKFRLEWINKLSVVILRGFDARIREYIKNRKQWQEKKDKEWTVSRALVGALDYLQGKTSIIEENLNKADFTAMWRTLASEIDKLFFNSILMANVKFTNDGVERLKVDMEVLYGVFRTWCVRPEGFFPKLSEGLTLLKMEEKQVKDGLSRGDKWLRENRIRYLSEAEAKKVAKSRVFS.

Positions 35 to 64 form a coiled coil; that stretch reads TGLVSELQTEISELDQRLAGLNRQLESGLA. The interval 91-111 is disordered; that stretch reads TSVTRSASDSGKEEEATEHVA. Over residues 100-111 the composition is skewed to basic and acidic residues; sequence SGKEEEATEHVA. One can recognise an RINT1/TIP20 domain in the interval 207-795; the sequence is ALAMMRPQAI…KKVAKSRVFS (589 aa).

The protein belongs to the RINT1 family. As to quaternary structure, interacts with SEC20 and SYP81. Interacts with ZW10 (via the central region). Forms a complex with ZW10/MIP1, MIP2 and MIP3 on the endoplasmic reticulum. As to expression, highly expressed in dry seeds. Expressed at low levels in roots, rosette and cauline leaves, stems and flowers.

The protein resides in the endoplasmic reticulum membrane. Its function is as follows. Functions in the anterograde transport of storage protein precursors from the endoplasmic reticulum (ER) to the Golgi complex and in the retrograde transport from the Golgi complex to the ER. Forms a complex with ZW10/MIP1, MIP2 and MIP3 on the ER that may be responsible for efficient transport of seed storage proteins. Required for the responses to environmental stresses during seed germination and vegetative growth. Probably not involved in the retrograde transport from the ER to the apoplast. The chain is RINT1-like protein MAG2 from Arabidopsis thaliana (Mouse-ear cress).